The chain runs to 558 residues: CTP synthase (558 aa).

Residues 1-271 are amidoligase domain; that stretch reads MAARQQTKHL…DAYVVRRLGL (271 aa). S18 lines the CTP pocket. S18 is a UTP binding site. ATP contacts are provided by residues 19-24 and D76; that span reads SLGKGL. Residues D76 and E145 each coordinate Mg(2+). CTP-binding positions include 152 to 154, 192 to 197, and K228; these read DIE and KTKPTQ. Residues 192–197 and K228 contribute to the UTP site; that span reads KTKPTQ. The Glutamine amidotransferase type-1 domain occupies 296-545; it reads TIALVGKYVD…IRAALLHRCP (250 aa). Position 359 (G359) interacts with L-glutamine. C386 acts as the Nucleophile; for glutamine hydrolysis in catalysis. L-glutamine-binding positions include 387-390, E410, and R471; that span reads LGLQ. Active-site residues include H518 and E520.

This sequence belongs to the CTP synthase family. Homotetramer.

The enzyme catalyses UTP + L-glutamine + ATP + H2O = CTP + L-glutamate + ADP + phosphate + 2 H(+). It carries out the reaction L-glutamine + H2O = L-glutamate + NH4(+). It catalyses the reaction UTP + NH4(+) + ATP = CTP + ADP + phosphate + 2 H(+). Its pathway is pyrimidine metabolism; CTP biosynthesis via de novo pathway; CTP from UDP: step 2/2. Its activity is regulated as follows. Allosterically activated by GTP, when glutamine is the substrate; GTP has no effect on the reaction when ammonia is the substrate. The allosteric effector GTP functions by stabilizing the protein conformation that binds the tetrahedral intermediate(s) formed during glutamine hydrolysis. Inhibited by the product CTP, via allosteric rather than competitive inhibition. Catalyzes the ATP-dependent amination of UTP to CTP with either L-glutamine or ammonia as the source of nitrogen. Regulates intracellular CTP levels through interactions with the four ribonucleotide triphosphates. The sequence is that of CTP synthase from Acidothermus cellulolyticus (strain ATCC 43068 / DSM 8971 / 11B).